A 139-amino-acid polypeptide reads, in one-letter code: Nucleoside diphosphate kinase (139 aa).

Positions 10, 58, 86, 92, 103, and 113 each coordinate ATP. Histidine 116 acts as the Pros-phosphohistidine intermediate in catalysis.

This sequence belongs to the NDK family. As to quaternary structure, homotetramer. Mg(2+) is required as a cofactor.

It is found in the cytoplasm. The catalysed reaction is a 2'-deoxyribonucleoside 5'-diphosphate + ATP = a 2'-deoxyribonucleoside 5'-triphosphate + ADP. It catalyses the reaction a ribonucleoside 5'-diphosphate + ATP = a ribonucleoside 5'-triphosphate + ADP. In terms of biological role, major role in the synthesis of nucleoside triphosphates other than ATP. The ATP gamma phosphate is transferred to the NDP beta phosphate via a ping-pong mechanism, using a phosphorylated active-site intermediate. In Oleidesulfovibrio alaskensis (strain ATCC BAA-1058 / DSM 17464 / G20) (Desulfovibrio alaskensis), this protein is Nucleoside diphosphate kinase.